We begin with the raw amino-acid sequence, 688 residues long: MQDIQLDKRLSELLSQAVTPQNAQPLMQALCQSLNEHNIRYYVDDAPSITDSEYDRLMQRLKQLEAEYPQFVAADSPTQRVGGMALAKFEQITHLKPMLSLDNAFDEADFSAFHKRVSDRVGEVSFCCEPKLDGLAVSILYRNGVLERAATRGDGTVGEDITENVKTIKSIPLKLRGDNYPELVEVRGEAFMPKAAFEALNERARLKDEKLFVNPRNAAAGSLRQLDSKITASRALSFYAYALGVVEPTSHELAKTHYEQLQQLKSWGLPVSSEIKVCDELSQVFAYYQDILTRRADLPFEIDGVVMKVNDIAQQQTLGFVAKSPRWAIAYKFPAQEEMTLLEGVDFQVGRTGAVTPVARLKPVFVGGVTVSNATLHNADEIERLGVMVGDTVIIRRAGDVIPQIVAIVPERRPEDAKAIAFPQHCPVCGSLVERLEGEAVTRCSGGLFCEAQRKEAIKHFASRKALDIDGMGDKIVEQLIDKELVQSPADLFKLTASMMTMLDRMGMKSATNLAQAIEAAKTTTLPRFLYALGIREVGEATAANLATHFGSLEALRVATIEQLIQVEDIGEVVAQHVAHFFAQPHNLEVIDALITAGVNWPTIAAPSADEQPLKGQTWVLTGTLNQLNRNDAKAQLQALGAKVAGSVSKNTDCLVAGEAAGSKLAKAQELGVKVIGEDELLALLANS.

NAD(+)-binding positions include 51–55, 100–101, and E129; these read DSEYD and SL. Catalysis depends on K131, which acts as the N6-AMP-lysine intermediate. Positions 152, 189, 308, and 332 each coordinate NAD(+). C426, C429, C444, and C450 together coordinate Zn(2+). Residues 609–688 enclose the BRCT domain; the sequence is ADEQPLKGQT…DELLALLANS (80 aa).

This sequence belongs to the NAD-dependent DNA ligase family. LigA subfamily. Mg(2+) is required as a cofactor. Requires Mn(2+) as cofactor.

It catalyses the reaction NAD(+) + (deoxyribonucleotide)n-3'-hydroxyl + 5'-phospho-(deoxyribonucleotide)m = (deoxyribonucleotide)n+m + AMP + beta-nicotinamide D-nucleotide.. In terms of biological role, DNA ligase that catalyzes the formation of phosphodiester linkages between 5'-phosphoryl and 3'-hydroxyl groups in double-stranded DNA using NAD as a coenzyme and as the energy source for the reaction. It is essential for DNA replication and repair of damaged DNA. The polypeptide is DNA ligase (Shewanella sp. (strain MR-7)).